A 944-amino-acid chain; its full sequence is Putative ATP-dependent RNA helicase (944 aa).

Positions 66-235 (TTPRSPIDGI…VPLHNLLMKL (170 aa)) constitute a Helicase ATP-binding domain. ATP is bound at residue 79-86 (HGVGTGKT). Residues 183–186 (DEAH) carry the DEAH box motif. The region spanning 451-523 (CLTREVMTVP…QIIGRGIRYQ (73 aa)) is the Helicase C-terminal domain.

Belongs to the DEAD box helicase family. DEAH subfamily.

It carries out the reaction ATP + H2O = ADP + phosphate + H(+). This chain is Putative ATP-dependent RNA helicase, found in Heliothis virescens ascovirus 3e (HvAV-3e).